The following is a 365-amino-acid chain: G-protein coupled receptor 4 (365 aa).

Topologically, residues 1–10 (MDNSTGTWEG) are extracellular. Asparagine 3 carries N-linked (GlcNAc...) asparagine glycosylation. Residues 11–47 (CHVDSRVDHLFPPSLYIFVIGVGLPTNCLALWAAYRQ) form a helical membrane-spanning segment. Disulfide bonds link cysteine 11/cysteine 260 and cysteine 92/cysteine 170. Residues 48 to 51 (VRQR) lie on the Cytoplasmic side of the membrane. A helical membrane pass occupies residues 52 to 82 (NELGVYLMNLSIADLLYICTLPLWVDYFLHH). Residues 83 to 87 (DNWIH) lie on the Extracellular side of the membrane. The helical transmembrane segment at 88-123 (GPGSCKLFGFIFYSNIYISIAFLCCISVDRYLAVAH) threads the bilayer. Over 124–131 (PLRFARLR) the chain is Cytoplasmic. Residues 132-158 (RVKTAVAVSSVVWATELGANSAPLFHD) form a helical membrane-spanning segment. Residues 159 to 174 (ELFRDRYNHTFCFEKF) lie on the Extracellular side of the membrane. Residues 159–174 (ELFRDRYNHTFCFEKF) form an extracellular loop 2 (ECL2) region. Asparagine 166 is a glycosylation site (N-linked (GlcNAc...) asparagine). The helical transmembrane segment at 175–212 (PMERWVAWMNLYRVFVGFLFPWALMLLCYRGILRAVQS) threads the bilayer. At 213-216 (SVST) the chain is on the cytoplasmic side. The chain crosses the membrane as a helical span at residues 217 to 252 (ERQEKVKIKRLALSLIAIVLVCFAPYHALLLSRSAV). The Extracellular portion of the chain corresponds to 253–262 (YLGRPWDCGF). Residues 263–291 (EERVFSAYHSSLAFTSLNCVADPILYCLV) form a helical membrane-spanning segment. Residues 292-365 (NEGARSDVAK…PLKVLLPPAQ (74 aa)) are Cytoplasmic-facing.

It belongs to the G-protein coupled receptor 1 family.

The protein localises to the cell membrane. Its activity is regulated as follows. Activated by a network of residues that connects an extracellular-facing cavity to Glu-147, a conserved charged residue buried in the transmembrane core of the receptor. Protonation likely drives conformational changes in extracellular loop 2 (ECL2), which stabilizes movement of transmembrane 3 (TM3) and a series of rearrangements that connect the extracellular-facing cavity to Glu-147, a residue only conserved in proton-sensing G-protein coupled receptors. In terms of biological role, proton-sensing G-protein coupled receptor activated by extracellular pH, which is required to monitor pH changes and generate adaptive reactions. Activated by an optimal pH of 6.8-7.2. Ligand binding causes a conformation change that triggers signaling via guanine nucleotide-binding proteins (G proteins) and modulates the activity of downstream effectors, such as adenylate cyclase. GPR4 is mainly coupled to G(s) G proteins and mediates activation of adenylate cyclase activity. May also couple with G(q) and G(12)/G(13) G proteins. Acts as a key regulator of respiratory sensitivity to CO2/H(+) in brain retrotrapezoid nucleus neurons: acts by mediating detection of protons generated by the formation of carbonic acid in the blood, an important mechanism to impulse to breathe. Also acts as a regulator of acid secretion in the kidney collecting duct by maintaining acid-base homeostasis in the kidney. Acidosis-induced GPR4 activation increases paracellular gap formation and permeability of vascular endothelial cells, possibly through the G(12)/G(13)/Rho GTPase signaling pathway. This Rattus norvegicus (Rat) protein is G-protein coupled receptor 4.